Reading from the N-terminus, the 291-residue chain is Glycine--tRNA ligase alpha subunit (291 aa).

Belongs to the class-II aminoacyl-tRNA synthetase family. Tetramer of two alpha and two beta subunits.

Its subcellular location is the cytoplasm. It carries out the reaction tRNA(Gly) + glycine + ATP = glycyl-tRNA(Gly) + AMP + diphosphate. This Rhizorhabdus wittichii (strain DSM 6014 / CCUG 31198 / JCM 15750 / NBRC 105917 / EY 4224 / RW1) (Sphingomonas wittichii) protein is Glycine--tRNA ligase alpha subunit.